The following is a 421-amino-acid chain: Probable UDP-arabinose 4-epimerase 1 (421 aa).

Residues 1-33 (MLPTNRNRPQQRPARSWYFISDMDFSDPKRKPR) lie on the Cytoplasmic side of the membrane. The helical; Signal-anchor for type II membrane protein transmembrane segment at 34–53 (YLSKILMVALLTAMCVVMLT) threads the bilayer. Over 54-421 (QPPCHRRTPS…GYGPPQAMVL (368 aa)) the chain is Lumenal. An NAD(+)-binding site is contributed by 74–105 (HVLVTGGAGYIGSHAALRLLKDSFRVTIVDNL). The active-site Proton acceptor is Tyr222.

The protein belongs to the NAD(P)-dependent epimerase/dehydratase family. It depends on NAD(+) as a cofactor.

The protein resides in the golgi apparatus. It is found in the golgi stack membrane. The enzyme catalyses UDP-beta-L-arabinopyranose = UDP-alpha-D-xylose. It functions in the pathway nucleotide-sugar biosynthesis; UDP-L-arabinose biosynthesis; UDP-L-arabinose from UDP-alpha-D-xylose: step 1/1. The protein operates within cell wall biogenesis; cell wall polysaccharide biosynthesis. The chain is Probable UDP-arabinose 4-epimerase 1 (UEL-1) from Oryza sativa subsp. japonica (Rice).